Reading from the N-terminus, the 93-residue chain is MAGIHVVLGLFEGALFTNVNAFLVLMIILSGLIGLFSGYASIGAFGSFVSFTHIASTVDLWIFNSMLYIIMTIVFVVMSLQAWQFIGSNGVNQ.

A run of 3 helical transmembrane segments spans residues 1–21 (MAGI…NVNA), 22–42 (FLVL…YASI), and 60–80 (LWIF…VMSL).

The protein localises to the host membrane. The protein is Putative transmembrane protein ORF25 of His1 virus (isolate Australia/Victoria) (His1V).